We begin with the raw amino-acid sequence, 966 residues long: Glycine dehydrogenase (decarboxylating) (966 aa).

The residue at position 713 (Lys-713) is an N6-(pyridoxal phosphate)lysine.

Belongs to the GcvP family. In terms of assembly, the glycine cleavage system is composed of four proteins: P, T, L and H. Pyridoxal 5'-phosphate is required as a cofactor.

The catalysed reaction is N(6)-[(R)-lipoyl]-L-lysyl-[glycine-cleavage complex H protein] + glycine + H(+) = N(6)-[(R)-S(8)-aminomethyldihydrolipoyl]-L-lysyl-[glycine-cleavage complex H protein] + CO2. The glycine cleavage system catalyzes the degradation of glycine. The P protein binds the alpha-amino group of glycine through its pyridoxal phosphate cofactor; CO(2) is released and the remaining methylamine moiety is then transferred to the lipoamide cofactor of the H protein. This is Glycine dehydrogenase (decarboxylating) from Shewanella halifaxensis (strain HAW-EB4).